The sequence spans 498 residues: Ribose import ATP-binding protein RbsA 1 (498 aa).

ABC transporter domains lie at 7–243 (LHIQ…VGRR) and 254–496 (PRGE…IGKS). ATP is bound at residue 39–46 (GENGAGKS).

The protein belongs to the ABC transporter superfamily. Ribose importer (TC 3.A.1.2.1) family. In terms of assembly, the complex is composed of an ATP-binding protein (RbsA), two transmembrane proteins (RbsC) and a solute-binding protein (RbsB).

The protein resides in the cell inner membrane. It carries out the reaction D-ribose(out) + ATP + H2O = D-ribose(in) + ADP + phosphate + H(+). Functionally, part of the ABC transporter complex RbsABC involved in ribose import. Responsible for energy coupling to the transport system. This is Ribose import ATP-binding protein RbsA 1 from Pasteurella multocida (strain Pm70).